A 375-amino-acid polypeptide reads, in one-letter code: Phosphoglycerate kinase (375 aa).

Residues Val1, Asp2, Phe3, Asn4, Arg17, Ser40, His41, Gly43, Arg44, Leu99, Arg100, His147, and Arg148 each coordinate (2R)-3-phosphoglycerate. Gly191 contacts ADP. Gly191 serves as a coordination point for CDP. AMP is bound by residues Ala192 and Lys193. Ala192 serves as a coordination point for ATP. Ala192 provides a ligand contact to Mg(2+). Asp196 lines the CDP pocket. Asp196 contributes to the Mg(2+) binding site. Lys197 contributes to the AMP binding site. Lys197 provides a ligand contact to ATP. Gly215 is a binding site for ADP. CDP is bound at residue Gly215. Residues Gly216 and Gly290 each contribute to the AMP site. ATP contacts are provided by Gly216 and Gly290. Gly315 and Phe320 together coordinate CDP. ADP is bound at residue Phe320. Glu321 provides a ligand contact to AMP. ATP contacts are provided by Glu321, Asp352, and Thr353. Asp352 provides a ligand contact to Mg(2+).

This sequence belongs to the phosphoglycerate kinase family. As to quaternary structure, monomer. Mg(2+) serves as cofactor.

It catalyses the reaction (2R)-3-phosphoglycerate + ATP = (2R)-3-phospho-glyceroyl phosphate + ADP. Its pathway is carbohydrate degradation; glycolysis; pyruvate from D-glyceraldehyde 3-phosphate: step 2/5. This chain is Phosphoglycerate kinase (PGK), found in Tetrahymena pyriformis.